We begin with the raw amino-acid sequence, 283 residues long: Bifunctional protein FolD (283 aa).

NADP(+) contacts are provided by residues 165–167, threonine 192, and valine 233; that span reads GRG.

Belongs to the tetrahydrofolate dehydrogenase/cyclohydrolase family. As to quaternary structure, homodimer.

The enzyme catalyses (6R)-5,10-methylene-5,6,7,8-tetrahydrofolate + NADP(+) = (6R)-5,10-methenyltetrahydrofolate + NADPH. The catalysed reaction is (6R)-5,10-methenyltetrahydrofolate + H2O = (6R)-10-formyltetrahydrofolate + H(+). It participates in one-carbon metabolism; tetrahydrofolate interconversion. Its function is as follows. Catalyzes the oxidation of 5,10-methylenetetrahydrofolate to 5,10-methenyltetrahydrofolate and then the hydrolysis of 5,10-methenyltetrahydrofolate to 10-formyltetrahydrofolate. This chain is Bifunctional protein FolD, found in Mycolicibacterium smegmatis (strain ATCC 700084 / mc(2)155) (Mycobacterium smegmatis).